Here is a 209-residue protein sequence, read N- to C-terminus: NAD-reducing hydrogenase HoxS subunit delta (209 aa).

In terms of assembly, tetramer of an alpha and a gamma subunits (flavin-containing dimer), and a delta and a nickel-containing beta subunits (hydrogenase dimer). It depends on [4Fe-4S] cluster as a cofactor. [3Fe-4S] cluster is required as a cofactor. Requires [2Fe-2S] cluster as cofactor. The cofactor is FMN. Ni(2+) serves as cofactor.

The protein localises to the cytoplasm. The catalysed reaction is H2 + NAD(+) = NADH + H(+). The chain is NAD-reducing hydrogenase HoxS subunit delta (hoxY) from Cupriavidus necator (strain ATCC 17699 / DSM 428 / KCTC 22496 / NCIMB 10442 / H16 / Stanier 337) (Ralstonia eutropha).